The chain runs to 1375 residues: ARF guanine-nucleotide exchange factor GNL2 (1375 aa).

The 191-residue stretch at His486–Asn676 folds into the SEC7 domain. The active site involves Glu590.

Homodimer. As to expression, preferentially expressed in mature pollen grains and growing pollen tubes.

The protein localises to the cytoplasm. Its subcellular location is the cytosol. It is found in the membrane. Activates the ARF proteins by exchanging bound GDP for free GTP. Plays a role in vesicular protein sorting. Essential for pollen germination. This is ARF guanine-nucleotide exchange factor GNL2 (GNL2) from Arabidopsis thaliana (Mouse-ear cress).